A 96-amino-acid polypeptide reads, in one-letter code: Large ribosomal subunit protein uL23 (96 aa).

The protein belongs to the universal ribosomal protein uL23 family. As to quaternary structure, part of the 50S ribosomal subunit. Contacts protein L29, and trigger factor when it is bound to the ribosome.

In terms of biological role, one of the early assembly proteins it binds 23S rRNA. One of the proteins that surrounds the polypeptide exit tunnel on the outside of the ribosome. Forms the main docking site for trigger factor binding to the ribosome. The polypeptide is Large ribosomal subunit protein uL23 (Alkaliphilus metalliredigens (strain QYMF)).